Reading from the N-terminus, the 98-residue chain is Integration host factor subunit alpha (98 aa).

The segment at 49–71 is disordered; it reads FGNFDLRDKNQRPGRNPKTGEDI.

The protein belongs to the bacterial histone-like protein family. As to quaternary structure, heterodimer of an alpha and a beta chain.

Its function is as follows. This protein is one of the two subunits of integration host factor, a specific DNA-binding protein that functions in genetic recombination as well as in transcriptional and translational control. The protein is Integration host factor subunit alpha of Shewanella amazonensis (strain ATCC BAA-1098 / SB2B).